Reading from the N-terminus, the 29-residue chain is Cyclotide psyleio D (29 aa).

Residues 1–29 (GLPVCGESCFGGTCNTPGCSCTWPVCTRD) constitute a cross-link (cyclopeptide (Gly-Asp)). 3 disulfides stabilise this stretch: Cys5/Cys19, Cys9/Cys21, and Cys14/Cys26.

In terms of processing, this is a cyclic peptide.

In terms of biological role, probably participates in a plant defense mechanism. This chain is Cyclotide psyleio D, found in Psychotria brachyceras.